Consider the following 542-residue polypeptide: Sensory neuron membrane protein 2 (542 aa).

At 1-487 the chain is on the extracellular side; that stretch reads MMVMNTELRQ…MKVLTLLDIV (487 aa). N-linked (GlcNAc...) asparagine glycosylation is found at Asn33, Asn128, Asn238, and Asn274. 3 disulfide bridges follow: Cys283/Cys351, Cys312/Cys378, and Cys353/Cys367. Residues 488–508 form a helical membrane-spanning segment; that stretch reads QWVMIGSGLLLAIIMPIVYFI. Residues 509–542 lie on the Cytoplasmic side of the membrane; it reads KRRPSSGSITPTLTTTTSTVSISDGGGLGGNPQK.

The protein belongs to the CD36 family. As to expression, detected in the antenna, legs and wings. Higher levels of expression detected in male compared to female.

The protein resides in the cell membrane. Functionally, plays an olfactory role that is not restricted to pheromone sensitivity. This chain is Sensory neuron membrane protein 2, found in Aedes aegypti (Yellowfever mosquito).